We begin with the raw amino-acid sequence, 180 residues long: MYKVLAGVGSIVRTLWMVFTHITRKRDTILYPEVPAEEIVPPRYRGRIVLTRDPDGEERCVACNLCAVACPVGCISLQKAEKEDGRWYPEFFRINFSRCIFCGMCEEACPTTAIQMTPDFELGEYVRQDLVYEKENLLISGPGKYPDYNFYRVAGMAIDGKEKGQAQKESAPIDVRSLLP.

4Fe-4S ferredoxin-type domains follow at residues 50-80 (LTRDPDGEERCVACNLCAVACPVGCISLQKA) and 90-119 (EFFRINFSRCIFCGMCEEACPTTAIQMTPD). Residues Cys-60, Cys-63, Cys-66, Cys-70, Cys-99, Cys-102, Cys-105, and Cys-109 each contribute to the [4Fe-4S] cluster site.

Belongs to the complex I 23 kDa subunit family. As to quaternary structure, NDH-1 is composed of 14 different subunits. Subunits NuoA, H, J, K, L, M, N constitute the membrane sector of the complex. [4Fe-4S] cluster serves as cofactor.

The protein localises to the cell inner membrane. It carries out the reaction a quinone + NADH + 5 H(+)(in) = a quinol + NAD(+) + 4 H(+)(out). Its function is as follows. NDH-1 shuttles electrons from NADH, via FMN and iron-sulfur (Fe-S) centers, to quinones in the respiratory chain. The immediate electron acceptor for the enzyme in this species is believed to be ubiquinone. Couples the redox reaction to proton translocation (for every two electrons transferred, four hydrogen ions are translocated across the cytoplasmic membrane), and thus conserves the redox energy in a proton gradient. This Acinetobacter baylyi (strain ATCC 33305 / BD413 / ADP1) protein is NADH-quinone oxidoreductase subunit I.